A 350-amino-acid chain; its full sequence is UDP-N-acetylenolpyruvoylglucosamine reductase (350 aa).

The 172-residue stretch at 24-195 folds into the FAD-binding PCMH-type domain; that stretch reads HVDATARWLL…VAVEFNLPLL (172 aa). The active site involves Arg-172. The Proton donor role is filled by Ser-245. Glu-342 is an active-site residue.

Belongs to the MurB family. FAD is required as a cofactor.

The protein resides in the cytoplasm. The catalysed reaction is UDP-N-acetyl-alpha-D-muramate + NADP(+) = UDP-N-acetyl-3-O-(1-carboxyvinyl)-alpha-D-glucosamine + NADPH + H(+). It participates in cell wall biogenesis; peptidoglycan biosynthesis. Its function is as follows. Cell wall formation. The polypeptide is UDP-N-acetylenolpyruvoylglucosamine reductase (Xanthomonas campestris pv. campestris (strain 8004)).